The sequence spans 407 residues: Endo-1,4-beta-xylanase D (407 aa).

The N-terminal stretch at 1–19 is a signal peptide; that stretch reads MTLVKSILLALAAGHVAQA. The 314-residue stretch at 20-333 folds into the GH10 domain; sequence QLNTAAKAAG…KPAYYGILAG (314 aa). N-linked (GlcNAc...) asparagine glycosylation occurs at Asn-118. Catalysis depends on Glu-148, which acts as the Proton donor. Glu-255 (nucleophile) is an active-site residue. A disulfide bridge links Cys-283 with Cys-289. The tract at residues 337–364 is disordered; it reads GSGSSSSTSSTTLITTTTPTASSSTTSA. Residues 371–407 enclose the CBM1 domain; the sequence is SGAAHWGQCGGIGWSGPTICVSPYTCQVLNPYYSQCL.

It belongs to the glycosyl hydrolase 10 (cellulase F) family.

Its subcellular location is the secreted. It carries out the reaction Endohydrolysis of (1-&gt;4)-beta-D-xylosidic linkages in xylans.. Its pathway is glycan degradation; xylan degradation. With respect to regulation, inhibited by wheat xylanase inhibiting protein I (XIP-I). Its function is as follows. Endo-1,4-beta-xylanase involved in the hydrolysis of xylan, a major structural heterogeneous polysaccharide found in plant biomass representing the second most abundant polysaccharide in the biosphere, after cellulose. Shows an endo-mode of action on xylan forming mainly xylobiose and short-chain xylooligosaccharides (XOS). This chain is Endo-1,4-beta-xylanase D (xynD), found in Talaromyces funiculosus (Fruitlet core rot fungus).